Here is a 297-residue protein sequence, read N- to C-terminus: Translocase of chloroplast 33, chloroplastic (297 aa).

The 225-residue stretch at 34 to 258 (MNSMTVLVLG…HVDKKMVDGS (225 aa)) folds into the AIG1-type G domain. A helical membrane pass occupies residues 37–53 (MTVLVLGKGGVGKSSTV). Residues 46 to 51 (GVGKSS) and 65 to 70 (SPFQAE) each bind GTP. Residues serine 50 and glutamine 68 each coordinate Mg(2+). 2 homodimerization regions span residues 65 to 68 (SPFQ) and 125 to 130 (RLDVYR). Residue histidine 160 participates in GTP binding. Serine 181 carries the post-translational modification Phosphoserine. 208 to 209 (EN) lines the GTP pocket.

It belongs to the TRAFAC class TrmE-Era-EngA-EngB-Septin-like GTPase superfamily. AIG1/Toc34/Toc159-like paraseptin GTPase family. TOC34 subfamily. In terms of assembly, homodimer, heterodimer with TOC34 and TOC159, and monomer. The homodimerization and the dimerization with TOC159 require the binding of GTP on Arg-130, and a hypothetical coGAP factor. The dimeric form has a higher GTPase activity than the monomeric form. Part of the TOC core complex that includes 1 protein for the specific recognition of transit peptides surrounded by a ring composed of four proteins forming translocation channels, and four to five GTP-binding proteins providing energy. This core complex can interact with components of the TIC complex to form a larger import complex. Chloroplastic protein precursor such as prSS (precursor of the RuBisCO small subunit) interacts with these complexes. The TOC complex contains a specific subset of polar lipids such as digalactosyldiacylglyceride (DGDG), phosphatidylcholine (PC) and phosphatidylglycerol (PG). Interacts at least with TOC75-3. Forms large complexes including TOC33, pPORA and OEP161 during pPORA import into plastids at the plastid envelope membrane. Interacts with SP1. Requires Mg(2+) as cofactor. Phosphorylated by a kinase present in the outer envelope of chloroplast. When Ser-181 is phosphorylated, the binding to preprotein, GTP and GDP is inhibited, and thus, GTPase activity is repressed. As to expression, mostly expressed in seedlings and flowers, and, to a lower extent, in roots, stems, and leaves.

The protein localises to the plastid. Its subcellular location is the chloroplast outer membrane. Its function is as follows. GTPase involved in protein precursor import into chloroplasts. Seems to recognize chloroplast-destined precursor proteins and regulate their presentation to the translocation channel through GTP hydrolysis. Binds GTP, GDP, XTP, but not ATP. Probably specialized in the import of nuclear encoded photosynthetic preproteins from the cytoplasm to the chloroplast, especially during early development stages. The polypeptide is Translocase of chloroplast 33, chloroplastic (TOC33) (Arabidopsis thaliana (Mouse-ear cress)).